We begin with the raw amino-acid sequence, 223 residues long: Deoxyribose-phosphate aldolase (223 aa).

Asp91 serves as the catalytic Proton donor/acceptor. Lys154 serves as the catalytic Schiff-base intermediate with acetaldehyde. The Proton donor/acceptor role is filled by Lys183.

It belongs to the DeoC/FbaB aldolase family. DeoC type 1 subfamily.

Its subcellular location is the cytoplasm. The enzyme catalyses 2-deoxy-D-ribose 5-phosphate = D-glyceraldehyde 3-phosphate + acetaldehyde. It functions in the pathway carbohydrate degradation; 2-deoxy-D-ribose 1-phosphate degradation; D-glyceraldehyde 3-phosphate and acetaldehyde from 2-deoxy-alpha-D-ribose 1-phosphate: step 2/2. Its function is as follows. Catalyzes a reversible aldol reaction between acetaldehyde and D-glyceraldehyde 3-phosphate to generate 2-deoxy-D-ribose 5-phosphate. The chain is Deoxyribose-phosphate aldolase from Geobacillus sp. (strain WCH70).